The sequence spans 215 residues: ATP phosphoribosyltransferase (215 aa).

It belongs to the ATP phosphoribosyltransferase family. Short subfamily. As to quaternary structure, heteromultimer composed of HisG and HisZ subunits.

The protein resides in the cytoplasm. It carries out the reaction 1-(5-phospho-beta-D-ribosyl)-ATP + diphosphate = 5-phospho-alpha-D-ribose 1-diphosphate + ATP. Its pathway is amino-acid biosynthesis; L-histidine biosynthesis; L-histidine from 5-phospho-alpha-D-ribose 1-diphosphate: step 1/9. In terms of biological role, catalyzes the condensation of ATP and 5-phosphoribose 1-diphosphate to form N'-(5'-phosphoribosyl)-ATP (PR-ATP). Has a crucial role in the pathway because the rate of histidine biosynthesis seems to be controlled primarily by regulation of HisG enzymatic activity. The protein is ATP phosphoribosyltransferase of Cyanothece sp. (strain PCC 7425 / ATCC 29141).